The sequence spans 785 residues: Tripartite terminase subunit 1 (785 aa).

The segment at 201 to 229 (CAVCFEELCVTANQGATIARRLADRICNH) adopts a C3H1-type zinc-finger fold. The segment at 439–487 (GGATGGAEEEEPRAAAEEGGRRRGAGTPASEDGERGPEPGAQGPESWGD) is disordered. Over residues 450–459 (PRAAAEEGGR) the composition is skewed to basic and acidic residues. 696 to 703 (FASVYRCG) contributes to the ATP binding site.

This sequence belongs to the herpesviridae TRM1 protein family. In terms of assembly, associates with TRM2 and TRM3 to form the tripartite terminase complex. Interacts with portal protein.

Its subcellular location is the host nucleus. Its function is as follows. Component of the molecular motor that translocates viral genomic DNA in empty capsid during DNA packaging. Forms a tripartite terminase complex together with TRM2 and TRM3 in the host cytoplasm. Once the complex reaches the host nucleus, it interacts with the capsid portal vertex. This portal forms a ring in which genomic DNA is translocated into the capsid. TRM1 carries an endonuclease activity that plays an important role for the cleavage of concatemeric viral DNA into unit length genomes. The protein is Tripartite terminase subunit 1 of Human herpesvirus 2 (strain HG52) (HHV-2).